A 358-amino-acid polypeptide reads, in one-letter code: S-adenosylmethionine:tRNA ribosyltransferase-isomerase (358 aa).

This sequence belongs to the QueA family. In terms of assembly, monomer.

The protein resides in the cytoplasm. The enzyme catalyses 7-aminomethyl-7-carbaguanosine(34) in tRNA + S-adenosyl-L-methionine = epoxyqueuosine(34) in tRNA + adenine + L-methionine + 2 H(+). The protein operates within tRNA modification; tRNA-queuosine biosynthesis. In terms of biological role, transfers and isomerizes the ribose moiety from AdoMet to the 7-aminomethyl group of 7-deazaguanine (preQ1-tRNA) to give epoxyqueuosine (oQ-tRNA). The sequence is that of S-adenosylmethionine:tRNA ribosyltransferase-isomerase from Chelativorans sp. (strain BNC1).